Reading from the N-terminus, the 777-residue chain is Glucocorticoid receptor (777 aa).

A compositionally biased stretch (basic and acidic residues) spans 1 to 14; that stretch reads MDSKESLTPGKEEN. The tract at residues 1-23 is disordered; it reads MDSKESLTPGKEENPSSVLTQER. The segment at 1-420 is modulating; sequence MDSKESLTPG…TATTGPPPKL (420 aa). The residue at position 8 (Thr8) is a Phosphothreonine. Arg23 bears the Omega-N-methylarginine mark. 4 positions are modified to phosphoserine: Ser45, Ser113, Ser134, and Ser141. Positions 130–182 are disordered; it reads NRSTSVPENPKSSASSSVSAAPKEKEFPKTHSDVSSEQQNLKGQTGTNGGNVK. Positions 134-150 are enriched in low complexity; it reads SVPENPKSSASSSVSAA. The segment covering 151 to 163 has biased composition (basic and acidic residues); sequence PKEKEFPKTHSDV. Residues 164-174 show a composition bias toward polar residues; sequence SSEQQNLKGQT. 3 positions are modified to phosphoserine: Ser203, Ser211, and Ser226. Lys258 participates in a covalent cross-link: Glycyl lysine isopeptide (Lys-Gly) (interchain with G-Cter in SUMO2). Residue Ser267 is modified to Phosphoserine. Residues Lys277 and Lys293 each participate in a glycyl lysine isopeptide (Lys-Gly) (interchain with G-Cter in SUMO); alternate cross-link. Residues Lys277 and Lys293 each participate in a glycyl lysine isopeptide (Lys-Gly) (interchain with G-Cter in SUMO2); alternate cross-link. Low complexity predominate over residues 394–414; the sequence is SSPSMRPDVSSPPSSSSTATT. The disordered stretch occupies residues 394–415; it reads SSPSMRPDVSSPPSSSSTATTG. Ser404 carries the post-translational modification Phosphoserine. Lys419 is covalently cross-linked (Glycyl lysine isopeptide (Lys-Gly) (interchain with G-Cter in ubiquitin)). NR C4-type zinc fingers lie at residues 421-441 and 457-481; these read CLVC…CGSC and CAGR…YRKC. A DNA-binding region (nuclear receptor) is located at residues 421–486; sequence CLVCSDEASG…RYRKCLQAGM (66 aa). N6-acetyllysine occurs at positions 480, 492, 494, and 495. An interaction with CLOCK region spans residues 485–777; it reads GMNLEARKTK…NIKKLLFHQK (293 aa). Positions 487 to 523 are hinge; that stretch reads NLEARKTKKKIKGIQQATTGVSQETSENPANKTIVPA. The NR LBD domain occupies 524-758; it reads TLPQLTPTLV…FPEMLAEIIT (235 aa). An interaction with CRY1 region spans residues 532–697; the sequence is LVSLLEVIEP…EIRMTYIKEL (166 aa). Lys703 participates in a covalent cross-link: Glycyl lysine isopeptide (Lys-Gly) (interchain with G-Cter in SUMO).

This sequence belongs to the nuclear hormone receptor family. NR3 subfamily. In terms of assembly, heteromultimeric cytoplasmic complex with HSP90AA1, HSPA1A/HSPA1B, and FKBP5 or another immunophilin such as PPID, STIP1, or the immunophilin homolog PPP5C. Upon ligand binding FKBP5 dissociates from the complex and FKBP4 takes its place, thereby linking the complex to dynein and mediating transport to the nucleus, where the complex dissociates. Probably forms a complex composed of chaperones HSP90 and HSP70, co-chaperones CDC37, PPP5C, TSC1 and client protein TSC2, CDK4, AKT, RAF1 and NR3C1; this complex does not contain co-chaperones STIP1/HOP and PTGES3/p23. Directly interacts with UNC45A. Binds to DNA as a homodimer, and as heterodimer with NR3C2 or the retinoid X receptor. Binds STAT5A and STAT5B homodimers and heterodimers. Interacts with NRIP1, POU2F1, POU2F2 and TRIM28. Interacts with several coactivator complexes, including the SMARCA4 complex, CREBBP/EP300, TADA2L (Ada complex) and p160 coactivators such as NCOA2 and NCOA6. Interaction with BAG1 inhibits transactivation. Interacts with HEXIM1 and TGFB1I1. Interacts with NCOA1. Interacts with NCOA3, SMARCA4, SMARCC1, SMARCD1, and SMARCE1. Interacts with CLOCK, CRY1 and CRY2 in a ligand-dependent fashion. Interacts with CIART. Interacts with RWDD3. Interacts with UBE2I/UBC9 and this interaction is enhanced in the presence of RWDD3. Interacts with GRIP1. Interacts with NR4A3 (via nuclear receptor DNA-binding domain), represses transcription activity of NR4A3 on the POMC promoter Nur response element (NurRE). Directly interacts with PNRC2 to attract and form a complex with UPF1 and DCP1A; the interaction leads to rapid mRNA degradation. Interacts with GSK3B. Interacts with FNIP1 and FNIP2. Interacts (via C-terminus) with HNRNPU (via C-terminus). Interacts with MCM3AP. Interacts (via domain NR LBD) with HSP90AA1 and HSP90AB1. In the absence of hormonal ligand, interacts with TACC1. Interacts (via NR LBD domain) with ZNF764 (via KRAB domain); the interaction regulates transcription factor activity of NR3C1 by directing its actions toward certain biologic pathways. Acetylation by CLOCK reduces its binding to glucocorticoid response elements and its transcriptional activity. Post-translationally, increased proteasome-mediated degradation in response to glucocorticoids. In terms of processing, phosphorylated in the absence of hormone; becomes hyperphosphorylated in the presence of glucocorticoid. The Ser-203, Ser-226 and Ser-404-phosphorylated forms are mainly cytoplasmic, and the Ser-211-phosphorylated form is nuclear. Phosphorylation at Ser-211 increases transcriptional activity. Phosphorylation at Ser-203, Ser-226 and Ser-404 decreases signaling capacity. Phosphorylation at Ser-404 may protect from glucocorticoid-induced apoptosis. Phosphorylation at Ser-203 and Ser-211 is not required in regulation of chromosome segregation. May be dephosphorylated by PPP5C, attenuates NR3C1 action. Ubiquitinated by UBR5, leading to its degradation: UBR5 specifically recognizes and binds ligand-bound NR3C1 when it is not associated with coactivators (NCOAs). In presence of NCOAs, the UBR5-degron is not accessible, preventing its ubiquitination and degradation. Post-translationally, sumoylation at Lys-277 and Lys-293 negatively regulates its transcriptional activity. Sumoylation at Lys-703 positively regulates its transcriptional activity in the presence of RWDD3. Sumoylation at Lys-277 and Lys-293 is dispensable whereas sumoylation at Lys-703 is critical for the stimulatory effect of RWDD3 on its transcriptional activity. Heat shock increases sumoylation in a RWWD3-dependent manner.

The protein localises to the cytoplasm. It localises to the nucleus. The protein resides in the mitochondrion. It is found in the cytoskeleton. Its subcellular location is the spindle. The protein localises to the microtubule organizing center. It localises to the centrosome. The protein resides in the chromosome. It is found in the nucleoplasm. Its function is as follows. Receptor for glucocorticoids (GC). Has a dual mode of action: as a transcription factor that binds to glucocorticoid response elements (GRE), both for nuclear and mitochondrial DNA, and as a modulator of other transcription factors. Affects inflammatory responses, cellular proliferation and differentiation in target tissues. Involved in chromatin remodeling. Plays a role in rapid mRNA degradation by binding to the 5' UTR of target mRNAs and interacting with PNRC2 in a ligand-dependent manner which recruits the RNA helicase UPF1 and the mRNA-decapping enzyme DCP1A, leading to RNA decay. Could act as a coactivator for STAT5-dependent transcription upon growth hormone (GH) stimulation and could reveal an essential role of hepatic GR in the control of body growth. Mediates glucocorticoid-induced apoptosis. Promotes accurate chromosome segregation during mitosis. May act as a tumor suppressor. May play a negative role in adipogenesis through the regulation of lipolytic and antilipogenic gene expression. This Aotus nancymaae (Ma's night monkey) protein is Glucocorticoid receptor (NR3C1).